The chain runs to 635 residues: Elongation factor 4 (635 aa).

The tr-type G domain maps to E11–T193. Residues D23–T28 and N140–D143 contribute to the GTP site.

This sequence belongs to the TRAFAC class translation factor GTPase superfamily. Classic translation factor GTPase family. LepA subfamily.

It localises to the cell membrane. The catalysed reaction is GTP + H2O = GDP + phosphate + H(+). In terms of biological role, required for accurate and efficient protein synthesis under certain stress conditions. May act as a fidelity factor of the translation reaction, by catalyzing a one-codon backward translocation of tRNAs on improperly translocated ribosomes. Back-translocation proceeds from a post-translocation (POST) complex to a pre-translocation (PRE) complex, thus giving elongation factor G a second chance to translocate the tRNAs correctly. Binds to ribosomes in a GTP-dependent manner. The protein is Elongation factor 4 of Streptococcus pyogenes serotype M12 (strain MGAS2096).